The sequence spans 28 residues: Cyclotide vodo I3 (28 aa).

3 disulfide bridges follow: Cys4/Cys18, Cys8/Cys20, and Cys13/Cys25.

This is a cyclic peptide. In terms of processing, contains 3 disulfide bonds.

In terms of biological role, probably participates in a plant defense mechanism. The protein is Cyclotide vodo I3 of Viola odorata (Sweet violet).